Here is a 122-residue protein sequence, read N- to C-terminus: Basic phospholipase A2 vipoxin B chain (122 aa).

Intrachain disulfides connect C26/C115, C28/C44, C43/C95, C49/C122, C50/C88, C57/C81, and C75/C86. Residues Y27, G29, and G31 each contribute to the Ca(2+) site. H47 is an active-site residue. D48 contributes to the Ca(2+) binding site. D89 is an active-site residue.

Belongs to the phospholipase A2 family. Group II subfamily. D49 sub-subfamily. In terms of assembly, heterodimer of A (AC P04084) and B chains; non-covalently linked. The A chain (acidic) is non-toxic, and increases the toxicity of the B chain (basic). The A chain may act as factor stabilizing the complex structure and hence retaining its toxicity by preventing non-specific binding. Upon binding to the target membranes the A chain is postulated to dissociate. The cofactor is Ca(2+). Expressed by the venom gland.

The protein localises to the secreted. The enzyme catalyses a 1,2-diacyl-sn-glycero-3-phosphocholine + H2O = a 1-acyl-sn-glycero-3-phosphocholine + a fatty acid + H(+). Functionally, heterodimer: postsynaptic neurotoxin. Monomer: snake venom phospholipase A2 (PLA2) that shows hemolytic activity and inhibition of platelet aggregation. The hemolytic activity occurs only in presence of fatty acids (unsaturated fatty acids facilitate induce a strong hemolytic activity, whereas saturated fatty acids induce a slight activity). The inhibition of platelet aggregation is almost maximal when aggregation is induced by collagen, and arachidonic acid, whereas it is only of 30% when the aggregation is induced by ADP. PLA2 catalyzes the calcium-dependent hydrolysis of the 2-acyl groups in 3-sn-phosphoglycerides. This Vipera ammodytes meridionalis (Eastern sand viper) protein is Basic phospholipase A2 vipoxin B chain.